We begin with the raw amino-acid sequence, 279 residues long: Movement protein (279 aa).

A disordered region spans residues 247 to 279 (ESEELNVESPPAAIGSSSASRSEAFRPQVVNGL). Positions 254–268 (ESPPAAIGSSSASRS) are enriched in low complexity.

Belongs to the cucumovirus movement protein family.

It localises to the host cell junction. Its subcellular location is the host plasmodesma. Its function is as follows. Transports viral genome to neighboring plant cells directly through plasmosdesmata, without any budding. The movement protein allows efficient cell to cell propagation, by bypassing the host cell wall barrier. Acts by forming a tubular structure at the host plasmodesmata, enlarging it enough to allow free passage of virion capsids. The polypeptide is Movement protein (Cucumis sativus (Cucumber)).